The primary structure comprises 226 residues: Enolase-phosphatase E1 (226 aa).

The protein belongs to the HAD-like hydrolase superfamily. MasA/MtnC family. As to quaternary structure, monomer. Mg(2+) serves as cofactor.

The enzyme catalyses 5-methylsulfanyl-2,3-dioxopentyl phosphate + H2O = 1,2-dihydroxy-5-(methylsulfanyl)pent-1-en-3-one + phosphate. Its pathway is amino-acid biosynthesis; L-methionine biosynthesis via salvage pathway; L-methionine from S-methyl-5-thio-alpha-D-ribose 1-phosphate: step 3/6. The protein operates within amino-acid biosynthesis; L-methionine biosynthesis via salvage pathway; L-methionine from S-methyl-5-thio-alpha-D-ribose 1-phosphate: step 4/6. In terms of biological role, bifunctional enzyme that catalyzes the enolization of 2,3-diketo-5-methylthiopentyl-1-phosphate (DK-MTP-1-P) into the intermediate 2-hydroxy-3-keto-5-methylthiopentenyl-1-phosphate (HK-MTPenyl-1-P), which is then dephosphorylated to form the acireductone 1,2-dihydroxy-3-keto-5-methylthiopentene (DHK-MTPene). This chain is Enolase-phosphatase E1, found in Shewanella baltica (strain OS223).